We begin with the raw amino-acid sequence, 37 residues long: Large ribosomal subunit protein bL36 (37 aa).

The protein belongs to the bacterial ribosomal protein bL36 family.

This Clostridioides difficile (strain 630) (Peptoclostridium difficile) protein is Large ribosomal subunit protein bL36.